A 95-amino-acid chain; its full sequence is Co-chaperonin GroES (95 aa).

It belongs to the GroES chaperonin family. In terms of assembly, heptamer of 7 subunits arranged in a ring. Interacts with the chaperonin GroEL.

It is found in the cytoplasm. In terms of biological role, together with the chaperonin GroEL, plays an essential role in assisting protein folding. The GroEL-GroES system forms a nano-cage that allows encapsulation of the non-native substrate proteins and provides a physical environment optimized to promote and accelerate protein folding. GroES binds to the apical surface of the GroEL ring, thereby capping the opening of the GroEL channel. In Chlorobaculum parvum (strain DSM 263 / NCIMB 8327) (Chlorobium vibrioforme subsp. thiosulfatophilum), this protein is Co-chaperonin GroES.